We begin with the raw amino-acid sequence, 197 residues long: Ion-translocating oxidoreductase complex subunit B (197 aa).

The segment at 1-26 is hydrophobic; that stretch reads MSTILIAIIALAALAAVFGAILGFAS. In terms of domain architecture, 4Fe-4S spans 32–90; it reads EADPIVDQIDSILPQTQCGQCGYPGCRPYAEAIANGDQINKCPPGGQATIEKLADLMGV. [4Fe-4S] cluster is bound by residues cysteine 49, cysteine 52, cysteine 57, cysteine 73, cysteine 114, cysteine 117, cysteine 120, cysteine 124, cysteine 144, cysteine 147, cysteine 150, and cysteine 154. 4Fe-4S ferredoxin-type domains lie at 105 to 134 and 135 to 164; these read TVAF…GGTK and ALHT…MIPV.

The protein belongs to the 4Fe4S bacterial-type ferredoxin family. RnfB subfamily. In terms of assembly, the complex is composed of six subunits: RnfA, RnfB, RnfC, RnfD, RnfE and RnfG. [4Fe-4S] cluster serves as cofactor.

The protein resides in the cell inner membrane. Part of a membrane-bound complex that couples electron transfer with translocation of ions across the membrane. This is Ion-translocating oxidoreductase complex subunit B from Vibrio campbellii (strain ATCC BAA-1116).